We begin with the raw amino-acid sequence, 94 residues long: MLQPIGDRVIVKVKEEEEKTVGGIVLASNAKQKPTEGEVVAVGEGAYTSNGDKLPMVVKKGDVVLYDKYSGTNVEYEGEKYLVLHEKDILAIEK.

Belongs to the GroES chaperonin family. Heptamer of 7 subunits arranged in a ring. Interacts with the chaperonin GroEL.

It is found in the cytoplasm. Its function is as follows. Together with the chaperonin GroEL, plays an essential role in assisting protein folding. The GroEL-GroES system forms a nano-cage that allows encapsulation of the non-native substrate proteins and provides a physical environment optimized to promote and accelerate protein folding. GroES binds to the apical surface of the GroEL ring, thereby capping the opening of the GroEL channel. This Lactobacillus acidophilus (strain ATCC 700396 / NCK56 / N2 / NCFM) protein is Co-chaperonin GroES.